Reading from the N-terminus, the 1630-residue chain is Probable phosphoinositide phosphatase SAC9 (1630 aa).

Positions 147-527 constitute an SAC domain; sequence LTELDIDGKH…ADAVTGKSYY (381 aa). The Phosphatase catalytic core; degenerate motif lies at 456 to 467; sequence RFNCADSLDRTN. The region spanning 508–542 is the WW domain; sequence APLPPGWEKRADAVTGKSYYIDHNTKTTTWSHPCP.

In terms of tissue distribution, ubiquitous. Most abundant in the roots with lower expression levels throughout the leaves and shoot.

Functionally, probable phosphoinositide phosphatase that could be involved in stress signaling. In Arabidopsis thaliana (Mouse-ear cress), this protein is Probable phosphoinositide phosphatase SAC9 (SAC9).